Consider the following 101-residue polypeptide: Urease subunit beta (101 aa).

It belongs to the urease beta subunit family. As to quaternary structure, heterotrimer of UreA (gamma), UreB (beta) and UreC (alpha) subunits. Three heterotrimers associate to form the active enzyme.

The protein resides in the cytoplasm. It catalyses the reaction urea + 2 H2O + H(+) = hydrogencarbonate + 2 NH4(+). The protein operates within nitrogen metabolism; urea degradation; CO(2) and NH(3) from urea (urease route): step 1/1. This chain is Urease subunit beta, found in Rhizobium johnstonii (strain DSM 114642 / LMG 32736 / 3841) (Rhizobium leguminosarum bv. viciae).